Reading from the N-terminus, the 108-residue chain is uncharacterized protein (108 aa).

Composition is skewed to basic and acidic residues over residues 1 to 15 (MSEAKDNGSRDEVLV) and 53 to 69 (KLKDRESHQENEDRNSE). The interval 1-77 (MSEAKDNGSR…SELDQDEEDK (77 aa)) is disordered.

This is an uncharacterized protein from Homo sapiens (Human).